Here is a 77-residue protein sequence, read N- to C-terminus: Putative defensin-like protein 158 (77 aa).

Positions 1-24 (MANISWSHFLILMLVFSVVKKGKG) are cleaved as a signal peptide. Disulfide bonds link C31–C77, C41–C60, C46–C71, and C50–C73.

This sequence belongs to the DEFL family.

The protein localises to the secreted. This chain is Putative defensin-like protein 158 (LCR23), found in Arabidopsis thaliana (Mouse-ear cress).